The chain runs to 104 residues: N(4)-acetylcytidine amidohydrolase (104 aa).

Residues 7–104 (TFFTRFEQDI…FWVIAFELVD (98 aa)) enclose the ASCH domain. The Proton acceptor role is filled by lysine 21. The active-site Nucleophile is the threonine 24. Residue glutamate 74 is the Proton donor of the active site.

This sequence belongs to the N(4)-acetylcytidine amidohydrolase family.

The enzyme catalyses N(4)-acetylcytidine + H2O = cytidine + acetate + H(+). It catalyses the reaction N(4)-acetyl-2'-deoxycytidine + H2O = 2'-deoxycytidine + acetate + H(+). It carries out the reaction N(4)-acetylcytosine + H2O = cytosine + acetate + H(+). In terms of biological role, catalyzes the hydrolysis of N(4)-acetylcytidine (ac4C). The sequence is that of N(4)-acetylcytidine amidohydrolase from Pasteurella multocida (strain Pm70).